The following is a 245-amino-acid chain: 1-(5-phosphoribosyl)-5-[(5-phosphoribosylamino)methylideneamino] imidazole-4-carboxamide isomerase (245 aa).

Residue aspartate 7 is the Proton acceptor of the active site. Aspartate 129 functions as the Proton donor in the catalytic mechanism.

This sequence belongs to the HisA/HisF family.

The protein resides in the cytoplasm. It catalyses the reaction 1-(5-phospho-beta-D-ribosyl)-5-[(5-phospho-beta-D-ribosylamino)methylideneamino]imidazole-4-carboxamide = 5-[(5-phospho-1-deoxy-D-ribulos-1-ylimino)methylamino]-1-(5-phospho-beta-D-ribosyl)imidazole-4-carboxamide. It participates in amino-acid biosynthesis; L-histidine biosynthesis; L-histidine from 5-phospho-alpha-D-ribose 1-diphosphate: step 4/9. The chain is 1-(5-phosphoribosyl)-5-[(5-phosphoribosylamino)methylideneamino] imidazole-4-carboxamide isomerase from Salmonella dublin (strain CT_02021853).